The sequence spans 204 residues: MNPSNNPKKTRHQSHMPQERDETKKEKKLLHRNIERQRRQEMAILFASLRSQLPLKYIKGKRAMSDHVNGAVSFIKDTQTRIKDLSARRDELKREIGDPTSLTGSGSGSGSSRSEPASVMVQPCVSGFEVVVSSLASGLEAWPLSRVLEVLHGQGLEVISSLTARVNERLMYTIQVEVNSFDCFDLAWLQQKLIEQLVLSTTRH.

2 disordered regions span residues Met1–Lys27 and Lys93–Pro116. Residues Glu26–Thr78 enclose the bHLH domain.

As to quaternary structure, homodimer.

The protein localises to the nucleus. The polypeptide is Transcription factor bHLH120 (BHLH120) (Arabidopsis thaliana (Mouse-ear cress)).